The following is a 366-amino-acid chain: Growth hormone secretagogue receptor type 1 (366 aa).

Over 1–40 the chain is Extracellular; it reads MWNATPSEEPGPNLTLPDLGWDAPPENDSLVEELLPLFPT. N-linked (GlcNAc...) asparagine glycosylation is found at Asn-13 and Asn-27. A helical membrane pass occupies residues 41-66; it reads PLLAGVTATCVALFVVGIAGNLLTML. Residues 67–72 are Cytoplasmic-facing; that stretch reads VVSRFR. The chain crosses the membrane as a helical span at residues 73–96; sequence EMRTTTNLYLSSMAFSDLLIFLCM. Residues 97–117 are Extracellular-facing; the sequence is PLDLFRLWQYRPWNLGNLLCK. Cys-116 and Cys-198 are joined by a disulfide. Residues 118-139 form a helical membrane-spanning segment; it reads LFQFVSESCTYATVLTITALSV. The Cytoplasmic segment spans residues 140–162; it reads ERYFAICFPLRAKVVVTKGRVKL. A helical transmembrane segment spans residues 163–183; the sequence is VILVIWAVAFCSAGPIFVLVG. Over 184–211 the chain is Extracellular; the sequence is VEHDNGTDPRDTNECRATEFAVRSGLLT. Residues 212 to 235 traverse the membrane as a helical segment; sequence VMVWVSSVFFFLPVFCLTVLYSLI. Topologically, residues 236–263 are cytoplasmic; that stretch reads GRKLWRRKRGEAAVGSSLRDQNHKQTVK. The chain crosses the membrane as a helical span at residues 264 to 285; it reads MLAVVVFAFILCWLPFHVGRYL. Over 286–302 the chain is Extracellular; the sequence is FSKSLEPGSVEIAQISQ. Residues 303–326 form a helical membrane-spanning segment; the sequence is YCNLVSFVLFYLSAAINPILYNIM. Residues 327 to 366 lie on the Cytoplasmic side of the membrane; sequence SKKYRVAVFKLLGFEPFSQRKLSTLKDESSRAWTESSINT.

The protein belongs to the G-protein coupled receptor 1 family. Pituitary and hypothalamus.

The protein resides in the cell membrane. Its function is as follows. Receptor for ghrelin, coupled to G-alpha-11 proteins. Stimulates growth hormone secretion. Also binds other growth hormone releasing peptides (GHRP) (e.g. Met-enkephalin and GHRP-6) as well as non-peptide, low molecular weight secretagogues (e.g. L-692,429, MK-0677, adenosine). This is Growth hormone secretagogue receptor type 1 (GHSR) from Sus scrofa (Pig).